The primary structure comprises 544 residues: Serine/threonine-protein kinase PAK 3 (544 aa).

The disordered stretch occupies residues 1–73 (MSDSLDNEEK…EKERPEISLP (73 aa)). Ser2 and Ser4 each carry phosphoserine. Polar residues predominate over residues 18–32 (MNSNNRDSSALNHSS). At Ser50 the chain carries Phosphoserine; by autocatalysis. The span at 63–73 (KEKERPEISLP) shows a compositional bias: basic and acidic residues. Residues 65–108 (KERPEISLPSDFEHTIHVGFDAVTGEFTGIPEQWARLLQTSNIT) form a GTPase-binding region. Positions 65–135 (KERPEISLPS…YDSKETVNNQ (71 aa)) are autoregulatory region. In terms of domain architecture, CRIB spans 70-83 (ISLPSDFEHTIHVG). Residues 84–267 (FDAVTGEFTG…IVSVGDPKKK (184 aa)) are linker. Ser139 bears the Phosphoserine; by autocatalysis mark. Disordered stretches follow at residues 156–197 (SNTK…RPEH) and 213–248 (PAAP…KMTD). Position 171 is a phosphoserine (Ser171). Over residues 171–186 (SEEEDEEEEEEEDDNE) the composition is skewed to acidic residues. Residues 224–235 (SAENANSSTLYR) are compositionally biased toward polar residues. The Protein kinase domain maps to 268–519 (YTRFEKIGQG…AKELLQHPFL (252 aa)). ATP contacts are provided by residues 274–282 (IGQGASGTV) and Lys297. The active-site Proton acceptor is the Asp387. Thr421 bears the Phosphothreonine; by autocatalysis mark.

Belongs to the protein kinase superfamily. STE Ser/Thr protein kinase family. STE20 subfamily. In terms of assembly, interacts tightly with GTP-bound but not GDP-bound CDC42/p21 and RAC1. Shows highly specific binding to the SH3 domains of phospholipase C-gamma and of adapter protein NCK. Interacts with the C-terminal of APP. Interacts with ARHGEF6 and ARHGEF7. Interacts with GIT1 and GIT2. Mg(2+) serves as cofactor. In terms of processing, autophosphorylated when activated by CDC42/p21. Post-translationally, neddylated. As to expression, detected at high levels in the brain and at low levels in the testis.

The protein resides in the cytoplasm. The catalysed reaction is L-seryl-[protein] + ATP = O-phospho-L-seryl-[protein] + ADP + H(+). The enzyme catalyses L-threonyl-[protein] + ATP = O-phospho-L-threonyl-[protein] + ADP + H(+). Its activity is regulated as follows. Activated by binding small G proteins. Binding of GTP-bound CDC42 or RAC1 to the autoregulatory region releases monomers from the autoinhibited dimer, enables phosphorylation of Thr-421 and allows the kinase domain to adopt an active structure. Serine/threonine protein kinase that plays a role in a variety of different signaling pathways including cytoskeleton regulation, cell migration, or cell cycle regulation. Plays a role in dendrite spine morphogenesis as well as synapse formation and plasticity. Acts as a downstream effector of the small GTPases CDC42 and RAC1. Activation by the binding of active CDC42 and RAC1 results in a conformational change and a subsequent autophosphorylation on several serine and/or threonine residues. Phosphorylates MAPK4 and MAPK6 and activates the downstream target MAPKAPK5, a regulator of F-actin polymerization and cell migration. Additionally, phosphorylates TNNI3/troponin I to modulate calcium sensitivity and relaxation kinetics of thin myofilaments. May also be involved in early neuronal development. In hippocampal neurons, necessary for the formation of dendritic spines and excitatory synapses; this function is dependent on kinase activity and may be exerted by the regulation of actomyosin contractility through the phosphorylation of myosin II regulatory light chain (MLC). This is Serine/threonine-protein kinase PAK 3 (Pak3) from Rattus norvegicus (Rat).